A 196-amino-acid polypeptide reads, in one-letter code: UMP-CMP kinase (196 aa).

13-18 (GAGKGT) serves as a coordination point for ATP. The interval 33 to 63 (SAGDLLRDERKRPGSQYGELIENYIKEGEIV) is NMP. Residues Arg-39, 61–63 (EIV), and 93–96 (GFPR) each bind a ribonucleoside 5'-phosphate. A CMP-binding site is contributed by Asn-100. The interval 133-143 (ERGKSSGRSDD) is LID. Position 134 (Arg-134) interacts with ATP. A ribonucleoside 5'-phosphate is bound by residues Arg-140 and Arg-151. Lys-179 lines the ATP pocket.

This sequence belongs to the adenylate kinase family. UMP-CMP kinase subfamily. As to quaternary structure, monomer. The cofactor is Mg(2+).

It localises to the nucleus. The protein localises to the cytoplasm. The catalysed reaction is CMP + ATP = CDP + ADP. It catalyses the reaction dCMP + ATP = dCDP + ADP. It carries out the reaction UMP + ATP = UDP + ADP. The enzyme catalyses a 2'-deoxyribonucleoside 5'-diphosphate + ATP = a 2'-deoxyribonucleoside 5'-triphosphate + ADP. The catalysed reaction is a ribonucleoside 5'-diphosphate + ATP = a ribonucleoside 5'-triphosphate + ADP. Catalyzes the phosphorylation of pyrimidine nucleoside monophosphates at the expense of ATP. Plays an important role in de novo pyrimidine nucleotide biosynthesis. Has preference for UMP and CMP as phosphate acceptors. Also displays broad nucleoside diphosphate kinase activity. This Gallus gallus (Chicken) protein is UMP-CMP kinase (CMPK).